The sequence spans 452 residues: Pup--protein ligase (452 aa).

Glu-9 contacts Mg(2+). Residue Arg-53 coordinates ATP. Mg(2+) is bound at residue Tyr-55. Asp-57 (proton acceptor) is an active-site residue. Glu-63 is a binding site for Mg(2+). Thr-66 and Trp-419 together coordinate ATP.

The protein belongs to the Pup ligase/Pup deamidase family. Pup-conjugating enzyme subfamily.

It carries out the reaction ATP + [prokaryotic ubiquitin-like protein]-L-glutamate + [protein]-L-lysine = ADP + phosphate + N(6)-([prokaryotic ubiquitin-like protein]-gamma-L-glutamyl)-[protein]-L-lysine.. Its pathway is protein degradation; proteasomal Pup-dependent pathway. It participates in protein modification; protein pupylation. In terms of biological role, catalyzes the covalent attachment of the prokaryotic ubiquitin-like protein modifier Pup to the proteasomal substrate proteins, thereby targeting them for proteasomal degradation. This tagging system is termed pupylation. The ligation reaction involves the side-chain carboxylate of the C-terminal glutamate of Pup and the side-chain amino group of a substrate lysine. This chain is Pup--protein ligase, found in Mycolicibacterium vanbaalenii (strain DSM 7251 / JCM 13017 / BCRC 16820 / KCTC 9966 / NRRL B-24157 / PYR-1) (Mycobacterium vanbaalenii).